The primary structure comprises 504 residues: Pre-mRNA-processing factor 19 (504 aa).

At Ser-2 the chain carries N-acetylserine. Residues 2–73 form the U-box domain; it reads SLICSISNEV…KPPSATSIPA (72 aa). Residues 68–223 form a may mediate interaction with PSMC5 region; the sequence is ATSIPAILKA…VGLHSASIPG (156 aa). Lys-122, Lys-179, Lys-244, and Lys-261 each carry N6-acetyllysine. The WD 1 repeat unit spans residues 219-259; sequence ASIPGILALDLCPSDTNKILTGGADKNVVVFDKSSEQILAT. 6 WD repeats span residues 262–301, 304–345, 348–387, 390–429, 433–472, and 473–503; these read GHTK…CVQV, AHES…TKVT, TSGC…NVAN, GHSG…NFKT, DNNF…LHFT, and EHSG…KFYS.

It belongs to the WD repeat PRP19 family. Homotetramer. Component of activated, catalytic and post-catalytic spliceosomes. Component of the Prp19 complex/PRP19C/Nineteen complex/NTC and related complexes described as PRP19-CDC5L splicing complex and PSO4 complex. A homotetramer of PRPF19, CDC5L, PLRG1 and BCAS2 constitute the core of those complexes. The interaction with CDC5L, PLRG1 and BCAS2 is direct within this core complex. At least three less stably associated proteins CTNNBL1, CWC15 and HSPA8 are found in the Prp19 complex. The Prp19 complex associates with the spliceosome during its assembly and remodeling recruiting additional proteins. Component of the XAB2 complex, a multimeric protein complex composed of XAB2, PRPF19, AQR, ZNF830, ISY1, and PPIE. Interacts with CWC22 and EIF4A3 in an RNA-independent manner. Interacts with RPA1 and RPA2; the PRP19-CDC5L complex is recruited to the sites of DNA repair where it interacts with the replication protein A complex (RPA). Interacts with SETMAR; required for SETMAR recruitment to site of DNA damage. Interacts with U2AF2; the interaction is direct and recruits the Prp19 complex to RNA polymerase II C-terminal domain (CTD) and the pre-mRNA. Interacts with PRPF3. Interacts with APEX1, DNTT and PSMB4. Interacts with PSMC5. Interacts with KNSTRN. Interacts (via N-terminus) with CDC5L. Interacts with KHDC4. Interacts with USB1. Interacts with DDX41. As to expression, ubiquitous. Weakly expressed in senescent cells of different tissue origins. Highly expressed in tumor cell lines.

It localises to the nucleus. Its subcellular location is the nucleoplasm. The protein localises to the cytoplasm. The protein resides in the cytoskeleton. It is found in the spindle. It localises to the lipid droplet. The enzyme catalyses S-ubiquitinyl-[E2 ubiquitin-conjugating enzyme]-L-cysteine + [acceptor protein]-L-lysine = [E2 ubiquitin-conjugating enzyme]-L-cysteine + N(6)-ubiquitinyl-[acceptor protein]-L-lysine.. It functions in the pathway protein modification; protein ubiquitination. Functionally, ubiquitin-protein ligase which is a core component of several complexes mainly involved pre-mRNA splicing and DNA repair. Required for pre-mRNA splicing as component of the spliceosome. Core component of the PRP19C/Prp19 complex/NTC/Nineteen complex which is part of the spliceosome and participates in its assembly, its remodeling and is required for its activity. During assembly of the spliceosome, mediates 'Lys-63'-linked polyubiquitination of the U4 spliceosomal protein PRPF3. Ubiquitination of PRPF3 allows its recognition by the U5 component PRPF8 and stabilizes the U4/U5/U6 tri-snRNP spliceosomal complex. Recruited to RNA polymerase II C-terminal domain (CTD) and the pre-mRNA, it may also couple the transcriptional and spliceosomal machineries. The XAB2 complex, which contains PRPF19, is also involved in pre-mRNA splicing, transcription and transcription-coupled repair. Beside its role in pre-mRNA splicing PRPF19, as part of the PRP19-CDC5L complex, plays a role in the DNA damage response/DDR. It is recruited to the sites of DNA damage by the RPA complex where PRPF19 directly ubiquitinates RPA1 and RPA2. 'Lys-63'-linked polyubiquitination of the RPA complex allows the recruitment of the ATR-ATRIP complex and the activation of ATR, a master regulator of the DNA damage response. May also play a role in DNA double-strand break (DSB) repair by recruiting the repair factor SETMAR to altered DNA. As part of the PSO4 complex may also be involved in the DNA interstrand cross-links/ICLs repair process. In addition, may also mediate 'Lys-48'-linked polyubiquitination of substrates and play a role in proteasomal degradation. May play a role in the biogenesis of lipid droplets. May play a role in neural differentiation possibly through its function as part of the spliceosome. The polypeptide is Pre-mRNA-processing factor 19 (Homo sapiens (Human)).